The chain runs to 524 residues: Cytochrome P450 4F12 (524 aa).

The next 2 membrane-spanning stretches (helical) occupy residues 19–39 (WLLLLLVVGSWLLARILAWTY) and 87–107 (GFTVWLGPIIPFIVLCHPDTI). Cys468 contacts heme.

It belongs to the cytochrome P450 family. Heme serves as cofactor. Expressed in small intestine, liver, colon and heart.

The protein resides in the endoplasmic reticulum membrane. Its subcellular location is the microsome membrane. The catalysed reaction is an organic molecule + reduced [NADPH--hemoprotein reductase] + O2 = an alcohol + oxidized [NADPH--hemoprotein reductase] + H2O + H(+). It carries out the reaction (5Z,8Z,11Z,14Z)-eicosatetraenoate + reduced [NADPH--hemoprotein reductase] + O2 = 18-hydroxy-(5Z,8Z,11Z,14Z)-eicosatetraenoate + oxidized [NADPH--hemoprotein reductase] + H2O + H(+). It catalyses the reaction (7Z,10Z,13Z,16Z,19Z)-docosapentaenoate + reduced [NADPH--hemoprotein reductase] + O2 = 10,11-epoxy-(7Z,13Z,16Z,19Z)-docosatetraenoate + oxidized [NADPH--hemoprotein reductase] + H2O + H(+). The enzyme catalyses (7Z,10Z,13Z,16Z,19Z)-docosapentaenoate + reduced [NADPH--hemoprotein reductase] + O2 = 13,14-epoxy-(7Z,10Z,16Z,19Z)-docosatetraenoate + oxidized [NADPH--hemoprotein reductase] + H2O + H(+). The catalysed reaction is (7Z,10Z,13Z,16Z,19Z)-docosapentaenoate + reduced [NADPH--hemoprotein reductase] + O2 = 16,17-epoxy-(7Z,10Z,13Z,19Z)-docosatetraenoate + oxidized [NADPH--hemoprotein reductase] + H2O + H(+). It carries out the reaction (7Z,10Z,13Z,16Z,19Z)-docosapentaenoate + reduced [NADPH--hemoprotein reductase] + O2 = 19,20-epoxy-(7Z,10Z,13Z,16Z)-docosatetraenoate + oxidized [NADPH--hemoprotein reductase] + H2O + H(+). It catalyses the reaction (4Z,7Z,10Z,13Z,16Z,19Z)-docosahexaenoate + reduced [NADPH--hemoprotein reductase] + O2 = 10,11-epoxy-(4Z,7Z,13Z,16Z,19Z)-docosapentaenoate + oxidized [NADPH--hemoprotein reductase] + H2O + H(+). The enzyme catalyses (4Z,7Z,10Z,13Z,16Z,19Z)-docosahexaenoate + reduced [NADPH--hemoprotein reductase] + O2 = 13,14-epoxy-(4Z,7Z,10Z,16Z,19Z)-docosapentaenoate + oxidized [NADPH--hemoprotein reductase] + H2O + H(+). The catalysed reaction is (4Z,7Z,10Z,13Z,16Z,19Z)-docosahexaenoate + reduced [NADPH--hemoprotein reductase] + O2 = 16,17-epoxy-(4Z,7Z,10Z,13Z,19Z)-docosapentaenoate + oxidized [NADPH--hemoprotein reductase] + H2O + H(+). It carries out the reaction (4Z,7Z,10Z,13Z,16Z,19Z)-docosahexaenoate + reduced [NADPH--hemoprotein reductase] + O2 = 19,20-epoxy-(4Z,7Z,10Z,13Z,16Z)-docosapentaenoate + oxidized [NADPH--hemoprotein reductase] + H2O + H(+). Its pathway is lipid metabolism; arachidonate metabolism. A cytochrome P450 monooxygenase involved in the metabolism of endogenous polyunsaturated fatty acids (PUFAs). Mechanistically, uses molecular oxygen inserting one oxygen atom into a substrate, and reducing the second into a water molecule, with two electrons provided by NADPH via cytochrome P450 reductase (CPR; NADPH-ferrihemoprotein reductase). Catalyzes the hydroxylation of carbon hydrogen bonds, with preference for omega-2 position. Metabolizes (5Z,8Z,11Z,14Z)-eicosatetraenoic acid (arachidonate) toward 18-hydroxy arachidonate. Catalyzes the epoxidation of double bonds of PUFAs such as docosapentaenoic and docosahexaenoic acids. Has low omega-hydroxylase activity toward leukotriene B4 and arachidonate. Involved in the metabolism of xenobiotics. Catalyzes the hydroxylation of the antihistamine drug ebastine. The protein is Cytochrome P450 4F12 of Homo sapiens (Human).